The primary structure comprises 71 residues: Translational regulator CsrA (71 aa).

The disordered stretch occupies residues 50 to 71 (RIRHEKDGDVPEAAPGQGADPQ).

The protein belongs to the CsrA/RsmA family. Homodimer; the beta-strands of each monomer intercalate to form a hydrophobic core, while the alpha-helices form wings that extend away from the core.

The protein localises to the cytoplasm. A key translational regulator that binds mRNA to regulate translation initiation and/or mRNA stability. Mediates global changes in gene expression, shifting from rapid growth to stress survival by linking envelope stress, the stringent response and the catabolite repression systems. Usually binds in the 5'-UTR; binding at or near the Shine-Dalgarno sequence prevents ribosome-binding, repressing translation, binding elsewhere in the 5'-UTR can activate translation and/or stabilize the mRNA. Its function is antagonized by small RNA(s). The chain is Translational regulator CsrA from Halorhodospira halophila (strain DSM 244 / SL1) (Ectothiorhodospira halophila (strain DSM 244 / SL1)).